The chain runs to 466 residues: Putative multidrug resistance protein MdtD (466 aa).

Helical transmembrane passes span 11 to 31 (LWIV…VNTA), 48 to 68 (SVIV…GWLA), 71 to 91 (IGVK…SLLC), 105 to 125 (VIQG…VMKI), 137 to 157 (FVTL…GFLV), 164 to 184 (WIFL…WFLM), 194 to 214 (FDIS…LALD), 218 to 238 (SLGI…IALL), 262 to 282 (FSIG…LPFM), 292 to 312 (GFSP…SMGI), 328 to 347 (VLVA…ALVA), 351 to 370 (WIWM…AIRF), 402 to 422 (SLGV…HIAA), and 429 to 449 (TVFL…ALIF).

It belongs to the major facilitator superfamily. TCR/Tet family.

It is found in the cell inner membrane. The sequence is that of Putative multidrug resistance protein MdtD from Pectobacterium atrosepticum (strain SCRI 1043 / ATCC BAA-672) (Erwinia carotovora subsp. atroseptica).